Here is a 79-residue protein sequence, read N- to C-terminus: MEKMVKFNLRYDELLKKIPYKYAIPVVVAKRAEAIREYAKPFVITDDENPVSIAFMELSLNYIRIKNEEILKALIPKVK.

The protein belongs to the RNA polymerase subunit omega family. As to quaternary structure, the RNAP catalytic core consists of 2 alpha, 1 beta, 1 beta' and 1 omega subunit. When a sigma factor is associated with the core the holoenzyme is formed, which can initiate transcription.

It carries out the reaction RNA(n) + a ribonucleoside 5'-triphosphate = RNA(n+1) + diphosphate. Functionally, promotes RNA polymerase assembly. Latches the N- and C-terminal regions of the beta' subunit thereby facilitating its interaction with the beta and alpha subunits. In Thermotoga petrophila (strain ATCC BAA-488 / DSM 13995 / JCM 10881 / RKU-1), this protein is DNA-directed RNA polymerase subunit omega.